We begin with the raw amino-acid sequence, 301 residues long: UDP-3-O-acyl-N-acetylglucosamine deacetylase (301 aa).

Zn(2+) contacts are provided by His81, His237, and Asp241. His264 (proton donor) is an active-site residue.

This sequence belongs to the LpxC family. Zn(2+) serves as cofactor.

It catalyses the reaction a UDP-3-O-[(3R)-3-hydroxyacyl]-N-acetyl-alpha-D-glucosamine + H2O = a UDP-3-O-[(3R)-3-hydroxyacyl]-alpha-D-glucosamine + acetate. It functions in the pathway glycolipid biosynthesis; lipid IV(A) biosynthesis; lipid IV(A) from (3R)-3-hydroxytetradecanoyl-[acyl-carrier-protein] and UDP-N-acetyl-alpha-D-glucosamine: step 2/6. Catalyzes the hydrolysis of UDP-3-O-myristoyl-N-acetylglucosamine to form UDP-3-O-myristoylglucosamine and acetate, the committed step in lipid A biosynthesis. The chain is UDP-3-O-acyl-N-acetylglucosamine deacetylase from Leptospira interrogans serogroup Icterohaemorrhagiae serovar copenhageni (strain Fiocruz L1-130).